The primary structure comprises 131 residues: ATP synthase epsilon chain (131 aa).

Belongs to the ATPase epsilon chain family. In terms of assembly, F-type ATPases have 2 components, CF(1) - the catalytic core - and CF(0) - the membrane proton channel. CF(1) has five subunits: alpha(3), beta(3), gamma(1), delta(1), epsilon(1). CF(0) has three main subunits: a, b and c.

It is found in the cell membrane. Produces ATP from ADP in the presence of a proton gradient across the membrane. The protein is ATP synthase epsilon chain of Clostridium novyi (strain NT).